A 171-amino-acid polypeptide reads, in one-letter code: Adenine phosphoribosyltransferase (171 aa).

Belongs to the purine/pyrimidine phosphoribosyltransferase family. As to quaternary structure, homodimer.

The protein localises to the cytoplasm. The enzyme catalyses AMP + diphosphate = 5-phospho-alpha-D-ribose 1-diphosphate + adenine. The protein operates within purine metabolism; AMP biosynthesis via salvage pathway; AMP from adenine: step 1/1. In terms of biological role, catalyzes a salvage reaction resulting in the formation of AMP, that is energically less costly than de novo synthesis. The chain is Adenine phosphoribosyltransferase (apt) from Prochlorococcus marinus subsp. pastoris (strain CCMP1986 / NIES-2087 / MED4).